A 780-amino-acid polypeptide reads, in one-letter code: Translation initiation factor IF-2 (780 aa).

The segment at 24–194 (AEEKGFPVKN…KGAPERKNKA (171 aa)) is disordered. 2 stretches are compositionally biased toward polar residues: residues 59–71 (EQSAASAQPQRKV) and 80–90 (QGTARTQTTAQ). 2 stretches are compositionally biased toward low complexity: residues 98–114 (NQTQRNNNNKNNGQTGN) and 132–158 (NNNTNNSNGRRNSNNSNSRGGRNSRNN). Over residues 159 to 176 (RNNRRRNNNNNNRYKKNQ) the composition is skewed to basic residues. Over residues 177–194 (RIKDTNQHKGAPERKNKA) the composition is skewed to basic and acidic residues. A tr-type G domain is found at 281–450 (PRAPVVTIMG…LLQSDVLELK (170 aa)). Residues 290–297 (GHVDHGKT) are G1. 290 to 297 (GHVDHGKT) lines the GTP pocket. Positions 315 to 319 (GITQA) are G2. Positions 336–339 (DTPG) are G3. GTP is bound by residues 336–340 (DTPGH) and 390–393 (NKID). A G4 region spans residues 390 to 393 (NKID). Residues 426 to 428 (SAK) form a G5 region.

The protein belongs to the TRAFAC class translation factor GTPase superfamily. Classic translation factor GTPase family. IF-2 subfamily.

It is found in the cytoplasm. One of the essential components for the initiation of protein synthesis. Protects formylmethionyl-tRNA from spontaneous hydrolysis and promotes its binding to the 30S ribosomal subunits. Also involved in the hydrolysis of GTP during the formation of the 70S ribosomal complex. This Levilactobacillus brevis (strain ATCC 367 / BCRC 12310 / CIP 105137 / JCM 1170 / LMG 11437 / NCIMB 947 / NCTC 947) (Lactobacillus brevis) protein is Translation initiation factor IF-2.